The chain runs to 118 residues: Large ribosomal subunit protein bL20 (118 aa).

The protein belongs to the bacterial ribosomal protein bL20 family.

Its function is as follows. Binds directly to 23S ribosomal RNA and is necessary for the in vitro assembly process of the 50S ribosomal subunit. It is not involved in the protein synthesizing functions of that subunit. This Photorhabdus laumondii subsp. laumondii (strain DSM 15139 / CIP 105565 / TT01) (Photorhabdus luminescens subsp. laumondii) protein is Large ribosomal subunit protein bL20.